Reading from the N-terminus, the 125-residue chain is Immunoglobulin heavy variable 4-39 (125 aa).

The N-terminal stretch at 1–26 (MDLMCKKMKHLWFFLLLVAAPRWVLS) is a signal peptide. A framework-1 region spans residues 27–51 (QLQLQESGPGLVKPSETLSLTCTVS). Residues 27 to 125 (QLQLQESGPG…ADTAVYYCAR (99 aa)) enclose the Ig-like domain. A disulfide bond links Cys48 and Cys123. Positions 52–61 (GGSISSSSYY) are complementarity-determining-1. Positions 62–78 (WGWIRQPPGKGLEWIGS) are framework-2. Residues 79-85 (IYYSGST) are complementarity-determining-2. Positions 86-123 (YYNPSLKSRVTISVDTSKNQFSLKLSSVTAADTAVYYC) are framework-3. A complementarity-determining-3 region spans residues 124–125 (AR).

As to quaternary structure, immunoglobulins are composed of two identical heavy chains and two identical light chains; disulfide-linked.

The protein resides in the secreted. The protein localises to the cell membrane. In terms of biological role, v region of the variable domain of immunoglobulin heavy chains that participates in the antigen recognition. Immunoglobulins, also known as antibodies, are membrane-bound or secreted glycoproteins produced by B lymphocytes. In the recognition phase of humoral immunity, the membrane-bound immunoglobulins serve as receptors which, upon binding of a specific antigen, trigger the clonal expansion and differentiation of B lymphocytes into immunoglobulins-secreting plasma cells. Secreted immunoglobulins mediate the effector phase of humoral immunity, which results in the elimination of bound antigens. The antigen binding site is formed by the variable domain of one heavy chain, together with that of its associated light chain. Thus, each immunoglobulin has two antigen binding sites with remarkable affinity for a particular antigen. The variable domains are assembled by a process called V-(D)-J rearrangement and can then be subjected to somatic hypermutations which, after exposure to antigen and selection, allow affinity maturation for a particular antigen. The chain is Immunoglobulin heavy variable 4-39 from Homo sapiens (Human).